The primary structure comprises 389 residues: Ethanolamine-phosphate cytidylyltransferase (389 aa).

The tract at residues 1–20 is disordered; it reads MIRNGRGAAGGAEQPGPGGR. CTP-binding positions include 221–222, 229–232, lysine 259, 307–310, and 336–340; these read AF, HVDF, HGKT, and SGSNL. Residue serine 338 is modified to Phosphoserine. Threonine 341 and threonine 342 each carry phosphothreonine.

Belongs to the cytidylyltransferase family. As to expression, strongest expression in liver, heart, and skeletal muscle.

The catalysed reaction is phosphoethanolamine + CTP + H(+) = CDP-ethanolamine + diphosphate. It functions in the pathway phospholipid metabolism; phosphatidylethanolamine biosynthesis; phosphatidylethanolamine from ethanolamine: step 2/3. Its function is as follows. Ethanolamine-phosphate cytidylyltransferase that catalyzes the second step in the synthesis of phosphatidylethanolamine (PE) from ethanolamine via the CDP-ethanolamine pathway. Phosphatidylethanolamine is a dominant inner-leaflet phospholipid in cell membranes, where it plays a role in membrane function by structurally stabilizing membrane-anchored proteins, and participates in important cellular processes such as cell division, cell fusion, blood coagulation, and apoptosis. The polypeptide is Ethanolamine-phosphate cytidylyltransferase (PCYT2) (Homo sapiens (Human)).